Here is a 365-residue protein sequence, read N- to C-terminus: WAT1-related protein At4g01430 (365 aa).

10 helical membrane-spanning segments follow: residues Trp7–Val27, Ile39–Trp59, Phe76–Tyr96, Thr100–Phe120, Ala132–Phe152, Trp183–Phe203, Tyr216–Tyr236, Phe250–Thr270, Val280–Ile300, and Leu305–Trp325. One can recognise an EamA 1 domain in the interval Met20 to Thr151. The EamA 2 domain maps to Tyr216–Leu324. Residues Leu339–Val365 are disordered. The segment covering Lys348–Val365 has biased composition (basic and acidic residues).

Belongs to the drug/metabolite transporter (DMT) superfamily. Plant drug/metabolite exporter (P-DME) (TC 2.A.7.4) family.

The protein localises to the membrane. This Arabidopsis thaliana (Mouse-ear cress) protein is WAT1-related protein At4g01430.